The sequence spans 403 residues: Argininosuccinate synthase (403 aa).

9 to 17 (AYSGGLDTS) is an ATP binding site. Residue Tyr-86 coordinates L-citrulline. Gly-116 lines the ATP pocket. The L-aspartate site is built by Thr-118, Asn-122, and Asp-123. Asn-122 lines the L-citrulline pocket. 4 residues coordinate L-citrulline: Arg-126, Ser-174, Glu-259, and Tyr-271.

This sequence belongs to the argininosuccinate synthase family. Type 1 subfamily. As to quaternary structure, homotetramer.

The protein localises to the cytoplasm. It catalyses the reaction L-citrulline + L-aspartate + ATP = 2-(N(omega)-L-arginino)succinate + AMP + diphosphate + H(+). It participates in amino-acid biosynthesis; L-arginine biosynthesis; L-arginine from L-ornithine and carbamoyl phosphate: step 2/3. In Ligilactobacillus salivarius (strain UCC118) (Lactobacillus salivarius), this protein is Argininosuccinate synthase.